The sequence spans 650 residues: Acetyl-coenzyme A synthetase (650 aa).

Residues 191-194 (RGGR), threonine 311, and asparagine 335 contribute to the CoA site. ATP is bound by residues 387-389 (GEP), 411-416 (DTWWQT), aspartate 500, and arginine 515. Serine 523 lines the CoA pocket. Arginine 526 is a binding site for ATP. Valine 537, histidine 539, and valine 542 together coordinate Mg(2+). Arginine 584 serves as a coordination point for CoA. Position 609 is an N6-acetyllysine (lysine 609).

This sequence belongs to the ATP-dependent AMP-binding enzyme family. Mg(2+) is required as a cofactor. Post-translationally, acetylated. Deacetylation by the SIR2-homolog deacetylase activates the enzyme.

It carries out the reaction acetate + ATP + CoA = acetyl-CoA + AMP + diphosphate. Catalyzes the conversion of acetate into acetyl-CoA (AcCoA), an essential intermediate at the junction of anabolic and catabolic pathways. AcsA undergoes a two-step reaction. In the first half reaction, AcsA combines acetate with ATP to form acetyl-adenylate (AcAMP) intermediate. In the second half reaction, it can then transfer the acetyl group from AcAMP to the sulfhydryl group of CoA, forming the product AcCoA. This chain is Acetyl-coenzyme A synthetase, found in Shewanella sp. (strain MR-7).